The chain runs to 519 residues: Iroquois-class homeodomain protein IRX-4 (519 aa).

The homeobox; TALE-type DNA-binding region spans 143–204 (GTRRKNATRE…NARRRLKKEN (62 aa)). The disordered stretch occupies residues 204–298 (NKMTWPPRNK…VPAAPDGPVK (95 aa)). The span at 213-222 (KCADEKRPYA) shows a compositional bias: basic and acidic residues. Composition is skewed to acidic residues over residues 223-235 (EGEE…EEAR) and 257-267 (LSDLDDFDPLE).

The protein belongs to the TALE/IRO homeobox family. In terms of assembly, interacts with the vitamin D receptor VDR but doesn't affect its transactivation activity. Predominantly expressed in cardiac ventricles.

It is found in the nucleus. Functionally, likely to be an important mediator of ventricular differentiation during cardiac development. In Homo sapiens (Human), this protein is Iroquois-class homeodomain protein IRX-4 (IRX4).